We begin with the raw amino-acid sequence, 596 residues long: MLVLKFVCLLASVAAAKPTSWSSHKVVEHLESAPEGWRIVGAADPAAVIDFWLAIERENPEQLYDTIYDVSTPGRARYGKHLKREELDDLLRPRVETSEGIISWLTNGGVKPQGIRDEGDWIRFSTDVKTAEQLMKTQFHVFKDDVSSVSRIRTLEYSVPASISSHVQMIQPTTLFGRQKPQNSLILSPLTTDLEAMSEEEFSASNCRSLVTTACLRELYGLGDRVTQARDDNRIGVSGFLEEYAQYRDLDLFLSRFEPSAKGFNFSEGLIAGGKNTQGGPGSSTEANLDMQYVVGLSHKAKVTYYSTAGRGPLIPDLSQPDQASNDNEPYLEQLRYLVKLPKNQLPSVLSTSYGDTEQSLPASYTKATCDLFAQLGTMGVSVIFSSGDTGPGSSCQTNDGKNSTRFNPIYPASCPFVTSIGGTVGTEPERAVSFSSGGFSDRFPRPQYQDNAVKGYLKILGNQWSGLFNPNGRAFPDIAAQGSNYAVYDKGRMTGVSGTSASAPAMAAIIAQLNDFRLAKGSPVLGFLNPWIYSKGFSGFTDIVDGGSRGCTGYDIYSGLKAKRVPYASWNATKGWDPVTGFGTPNFQALTKVLP.

A signal peptide spans 1-16; the sequence is MLVLKFVCLLASVAAA. Positions 18 to 203 are cleaved as a propeptide — removed in mature form; sequence PTSWSSHKVV…LEAMSEEEFS (186 aa). Residues 210 to 596 enclose the Peptidase S53 domain; the sequence is LVTTACLREL…NFQALTKVLP (387 aa). N-linked (GlcNAc...) asparagine glycosylation occurs at asparagine 265. Residues glutamate 286 and aspartate 290 each act as charge relay system in the active site. Asparagine 403 carries an N-linked (GlcNAc...) asparagine glycan. Serine 501 functions as the Charge relay system in the catalytic mechanism. Positions 543 and 544 each coordinate Ca(2+). The N-linked (GlcNAc...) asparagine glycan is linked to asparagine 572. Ca(2+) is bound by residues glycine 576 and aspartate 578.

Ca(2+) is required as a cofactor.

It localises to the secreted. Its subcellular location is the extracellular space. The catalysed reaction is Release of an N-terminal tripeptide from a polypeptide.. In terms of biological role, secreted tripeptidyl-peptidase which degrades proteins at acidic pHs and is involved in virulence. The chain is Tripeptidyl-peptidase SED2 (SED2) from Arthroderma otae (strain ATCC MYA-4605 / CBS 113480) (Microsporum canis).